Reading from the N-terminus, the 514-residue chain is Polygalacturonase (514 aa).

A signal peptide spans 1 to 22 (MGMKFMAAVAFLALQLIVMAAA). Positions 23-50 (EDQSAQIMLDSDIEQYLRSNRSLKKLVH) are excised as a propeptide. PbH1 repeat units lie at residues 214–240 (CEGVKIQGLKIKAPRDSPNTDGIDIFA), 241–262 (SKRFHIEKCVIGTGDDCIAIGT), 264–284 (SSNITIKDLICGPGHGISIGS), 294–315 (VSHVHVNRAKFIDTQNGLRIKT), 323–344 (ASYITYENVEMINSENPILINQ), and 357–384 (RSAVQIQGVTYKNIHGTSATAAAIQLMC). Asp255 (proton donor) is an active-site residue. N-linked (GlcNAc...) asparagine glycosylation occurs at Asn266. His278 is a catalytic residue. Asn397 carries an N-linked (GlcNAc...) asparagine glycan.

This sequence belongs to the glycosyl hydrolase 28 family.

The protein resides in the secreted. It is found in the cell wall. The catalysed reaction is (1,4-alpha-D-galacturonosyl)n+m + H2O = (1,4-alpha-D-galacturonosyl)n + (1,4-alpha-D-galacturonosyl)m.. In Chamaecyparis obtusa (Hinoki false-cypress), this protein is Polygalacturonase.